A 687-amino-acid chain; its full sequence is Chloride channel protein ClC-Kb (687 aa).

At 1 to 50 the chain is on the cytoplasmic side; the sequence is MEEFVGLREGSSGNPVTLQELWGPCPRIRRGIRGGLEWLKQKLFRLGEDW. The next 2 membrane-spanning stretches (helical) occupy residues 51–82 and 91–111; these read YFLM…QWLY and LRYL…SGFS. The helical intramembrane region spans 116–127; sequence PSSGGSGIPEVK. Ser-121 is a binding site for chloride. Transmembrane regions (helical) follow at residues 141–160 and 161–180; these read IKNF…CGST and LFLG…AAYL. Residue Asn-193 is glycosylated (N-linked (GlcNAc...) asparagine). The helical intramembrane region spans 203-224; that stretch reads AAAAVGVATVFAAPFSGVLFSI. A helical membrane pass occupies residues 236–255; that stretch reads YWRGFFAATCGAFMFRLLAV. Positions 259, 261, 278, and 281 each coordinate Ca(2+). 2 consecutive transmembrane segments (helical) span residues 282 to 310 and 325 to 342; these read IFFF…FGFI and PVYS…TYPP. An intramembrane region (helical) is located at residues 349–360; it reads ASRLSMKQHLDS. 2 consecutive transmembrane segments (helical) span residues 400–420 and 421–440; these read GTLA…TTIP and MPAG…GRLF. A chloride-binding site is contributed by Phe-426. Positions 464 to 496 form an intramembrane region, helical; sequence GGYALAGAAAFSGAVTHTISTALLAFEVTGQIV. The chain crosses the membrane as a helical span at residues 500 to 520; sequence PVLMAVLAANAIAQSCQPSFY. Residues 521–687 lie on the Cytoplasmic side of the membrane; that stretch reads DGTVIVKKLP…SNLTNPPAPK (167 aa). CBS domains lie at 551–609 and 626–684; these read MNHS…EPPS and CPTE…TNPP.

It belongs to the chloride channel (TC 2.A.49) family. CLCNKB subfamily. As to quaternary structure, homodimer. Interacts with BSND. In terms of processing, N-glycosylated.

It localises to the basolateral cell membrane. It carries out the reaction chloride(in) = chloride(out). The catalysed reaction is iodide(out) = iodide(in). It catalyses the reaction nitrate(in) = nitrate(out). The enzyme catalyses bromide(in) = bromide(out). Its activity is regulated as follows. Activated by extracellular Ca(2+) and inhibited by extracellular acidic pH. In terms of biological role, anion-selective channel permeable to small monovalent anions with ion selectivity for chloride &gt; bromide &gt; nitrate &gt; iodide. Forms a homodimeric channel where each subunit has its own ion conduction pathway. May conduct double-barreled currents controlled by two types of gates, two fast gates that control each subunit independently and a slow common gate that opens and shuts off both subunits simultaneously. Assembles with the regulatory subunit BSND/Barttin for sorting at the basolateral plasma membrane domain and functional switch to the ion conducting state. CLCNKB:BSND channels display mostly a linear current-voltage relationship controlled by common gate. Mediates chloride conductance along nephron segments, namely the thick ascending limb of Henle's loop, convoluted tubule and the collecting duct, contributing to the maintenance of systemic acid-base and electrolyte homeostasis. Conducts chloride currents in the stria vascularis of the inner ear to establish the endocochlear potential necessary for normal hearing. This Homo sapiens (Human) protein is Chloride channel protein ClC-Kb.